A 257-amino-acid chain; its full sequence is Type III pantothenate kinase (257 aa).

6–13 (DCGNTNTV) serves as a coordination point for ATP. 107 to 110 (GPDR) contributes to the substrate binding site. Residue Asp109 is the Proton acceptor of the active site. Asp129 contacts K(+). Thr132 is a binding site for ATP. Thr184 provides a ligand contact to substrate.

This sequence belongs to the type III pantothenate kinase family. As to quaternary structure, homodimer. NH4(+) serves as cofactor. K(+) is required as a cofactor.

Its subcellular location is the cytoplasm. It carries out the reaction (R)-pantothenate + ATP = (R)-4'-phosphopantothenate + ADP + H(+). It functions in the pathway cofactor biosynthesis; coenzyme A biosynthesis; CoA from (R)-pantothenate: step 1/5. Functionally, catalyzes the phosphorylation of pantothenate (Pan), the first step in CoA biosynthesis. The polypeptide is Type III pantothenate kinase (Cereibacter sphaeroides (strain ATCC 17025 / ATH 2.4.3) (Rhodobacter sphaeroides)).